The following is a 131-amino-acid chain: uncharacterized protein (131 aa).

In terms of domain architecture, CMP/dCMP-type deaminase spans 1–116; that stretch reads MYMARMLSEM…EMLEASSIQC (116 aa).

This is an uncharacterized protein from Caenorhabditis elegans.